Consider the following 580-residue polypeptide: Jasmonoyl--L-amino acid synthetase JAR6 (580 aa).

S100 contributes to the ATP binding site. S103 is a binding site for jasmonate. ATP-binding positions include M120, T123, G164, N169, and 332-337 (GSSEGW). Position 167–171 (167–171 (TTNVY)) interacts with an L-alpha-amino acid. 329–332 (ADYG) lines the jasmonate pocket. An L-alpha-amino acid is bound at residue 534-538 (KILDH).

The protein belongs to the IAA-amido conjugating enzyme family.

The catalysed reaction is a jasmonate + an L-alpha-amino acid + ATP = a jasmonyl-L-amino acid + AMP + diphosphate + H(+). Functionally, catalyzes the synthesis of jasmonate-amino acid conjugates by adenylation. Catalyzes the conjugation of jasmonate (JA) to Ile, Leu and Val. Catalyzes the conjugation of JA to Ile that may mediate defense signaling and resistance to the herbivore Manduca sexta caterpillars. The protein is Jasmonoyl--L-amino acid synthetase JAR6 (JAR6) of Nicotiana attenuata (Coyote tobacco).